Here is a 1050-residue protein sequence, read N- to C-terminus: FHIP family protein GE18198 (1050 aa).

Phosphoserine is present on residues Ser-498 and Ser-805. Disordered stretches follow at residues 800–827, 865–888, 911–954, and 968–995; these read KGNE…GQLR, TSMF…SASS, TDGR…SGSN, and SNTT…SEPA. Residues 808–826 show a composition bias toward polar residues; sequence HHSQQQQMATNSGQQQGQL. Over residues 872 to 888 the composition is skewed to low complexity; that stretch reads SASNTSTTPPNGSSASS. The span at 918-935 shows a compositional bias: polar residues; that stretch reads HAQTSAGTCETSLSTQPQ. Residues 941–954 show a composition bias toward low complexity; it reads TGAIATSATASGSN. Residues 968–977 are compositionally biased toward polar residues; it reads SNTTTHSAST.

This sequence belongs to the FHIP family.

This is FHIP family protein GE18198 from Drosophila yakuba (Fruit fly).